The following is a 489-amino-acid chain: Hyaluronoglucuronidase (489 aa).

The active-site Proton donor is Glu-176. Catalysis depends on Glu-290, which acts as the Nucleophile.

It belongs to the glycosyl hydrolase 79 family.

It carries out the reaction Random hydrolysis of (1-&gt;3)-linkages between beta-D-glucuronate and N-acetyl-D-glucosamine residues in hyaluronate.. Its activity is regulated as follows. Hyaluronidase activity is inhibited by Mn(2+), Cu(2+) and Fe(3+). In terms of biological role, hyaluronidase that mediates hydrolysis of (1-&gt;3)-linkages between beta-D-glucuronate and N-acetyl-D-glucosamine residues in hyaluronate. Very specific to hyaluronate: not able to hydrolyze chitin, heparin or chondroitin sulfate. This chain is Hyaluronoglucuronidase, found in Hirudo nipponia (Korean blood-sucking leech).